The following is a 1165-amino-acid chain: MPNSVLWAVDLFGRVYTLSTAGQYWEMCKDSQLEFKRVSATTQCCWGIACDNQVYVYVCASDVPIRRREEAYENQRWNPMGGFCEKLLLSDRWGWSDVSGLQHRPLDRVALPSPHWEWESDWYVDENFGGEPTEKGGWTYAIDFPATYTKDKKWNSCVRRRKWIRYRRYKSRDIWAKIPSKDDPKELPDPFNDLSVGGWEITEEPVGRLSVWAVSLQGKVWYREDVSHSNPEGSSWSLLDTPGEVVQISCGPHDLLWATLWEGQALVREGINRSNPKGSSWSIVEPPGSENGVMHISVGVSVVWAVTKDWKVWFRRGVNSHNPCGTSWIEMVGEMTMVNVGMNDQVWGIGCEDRAVYFRQGVTPSELSGKTWKAIIAARECDRSHSGSSSSLLSAGCFFGDEVRGSGESAPSDTDASSEVERPGPGQILPAEPLDDSKNATGNSASGLGAGRTAEDTVEDACPAEGSREARPNTHPGPAPTPAELPWTNIDLKEAKKVPSHSAAGFPETTSLSSLGLLPLGLEEPYGVDDHPLWAWVSGGGCVVEACAMPRWFTVQAGLSSSVHMLSLSITPAQTAAWRKQIFQQLTERTKRELENFRHYEQAVEQSVWVKTGALQWWCDWKPHKWVDVRLALEQFTGHDGVRDSILFIYYVVHEEKKYIHIFLNEVVALVPVLNETKHSFALYTPERTRQRWPVRLAAATEQDMNDWLALLSLSCCESRKVQGRPSPQAIWSITCKGDIFVSEPSPDLEAHEHPLPCDQMFWRQMGGHLRMVEANSRGVVWGIGYDHTAWVYTGGYGGGCFQGLASSTSNIYTQSDVKCVHIYENQRWNPVTGYTSRGLPTDRYMWSDASGLQECTKAGTKPPSLQWAWVSDWFVDFSVPGGTDQEGWQYASDFPASYHGSKTMKDFVRRRCWARKCKLVTSGPWLEVPPIALRDVSIIPESPGAEGSGHSIALWAVSDKGDVLCRLGVSELNPAGSSWLHVGTDQPFASISIGACYQVWAVARDGSAFYRGSVYPSQPAGDCWYHIPSPPRQRLKQVSAGQTSVYALDENGNLWYRQGITPSYPQGSSWEHVSNNVCRVSVGPLDQVWVIANKVQGSHSLSRGTVCHRTGVQPHEPKGHGWDYGIGGGWDHISVRANATRAPRSSSQEQEPSAPPEAHGPVCC.

TECPR repeat units follow at residues 209-240 (LSVW…SLLD), 254-285 (DLLW…SIVE), 301-332 (SVVW…IEMV), and 344-376 (DQVW…KAII). Residues S386, S388, S391, S412, and S417 each carry the phosphoserine modification. Residues 404-486 (RGSGESAPSD…GPAPTPAELP (83 aa)) are disordered. The PH domain maps to 611–717 (KTGALQWWCD…WLALLSLSCC (107 aa)). Residues 729–756 (QAIWSITCKGDIFVSEPSPDLEAHEHPL) form a TECPR 5 repeat. Phosphoserine is present on residues S938 and S949. TECPR repeat units follow at residues 953-984 (IALW…LHVG), 998-1029 (YQVW…YHIP), 1044-1075 (TSVY…EHVS), and 1087-1127 (DQVW…DYGI). Positions 1140 to 1165 (ATRAPRSSSQEQEPSAPPEAHGPVCC) are disordered. Over residues 1143–1153 (APRSSSQEQEP) the composition is skewed to low complexity.

The protein belongs to the TECPR1 family. Interacts with ATG5; the interaction is direct. Interacts with WIPI2. Interacts with the ATG5-ATG12 conjugate, the interaction is however mutually exclusive with ATG16, since it does not interact with ATG12-ATG5-ATG16 complex.

Its subcellular location is the cytoplasmic vesicle. The protein resides in the autophagosome membrane. It localises to the lysosome membrane. Functionally, tethering factor involved in autophagy. Involved in autophagosome maturation by promoting the autophagosome fusion with lysosomes: acts by associating with both the ATG5-ATG12 conjugate and phosphatidylinositol-3-phosphate (PtdIns(3)P) present at the surface of autophagosomes. Also involved in selective autophagy against bacterial pathogens, by being required for phagophore/preautophagosomal structure biogenesis and maturation. In Homo sapiens (Human), this protein is Tectonin beta-propeller repeat-containing protein 1 (TECPR1).